We begin with the raw amino-acid sequence, 2517 residues long: Non-reducing polyketide synthase pkbA (2517 aa).

The segment at 59–250 is N-terminal acylcarrier protein transacylase domain (SAT); the sequence is LERVAGPAEK…KRFDLRGRFH (192 aa). A Ketosynthase family 3 (KS3) domain is found at 380–775; sequence SEPIAIIGMG…SANTVSSLKE (396 aa). Residues Cys547, His682, and His721 each act as for beta-ketoacyl synthase activity in the active site. A malonyl-CoA:ACP transacylase (MAT) domain region spans residues 849-1158; that stretch reads AFGGQVARSV…TGTAALADAT (310 aa). Ser935 acts as the For acyl/malonyl transferase activity in catalysis. The tract at residues 1221-1353 is N-terminal hotdog fold; it reads EEFLTFVKYK…GTVVLRENDT (133 aa). Positions 1221 to 1530 constitute a PKS/mFAS DH domain; the sequence is EEFLTFVKYK…FTRVQISSLG (310 aa). Positions 1251–1525 are product template (PT) domain; sequence FVKGHAVLAE…ILGAHFTRVQ (275 aa). His1255 functions as the Proton acceptor; for dehydratase activity in the catalytic mechanism. The tract at residues 1379–1530 is C-terminal hotdog fold; sequence DCHILQGPVV…FTRVQISSLG (152 aa). Catalysis depends on Asp1437, which acts as the Proton donor; for dehydratase activity. In terms of domain architecture, Carrier 1 spans 1574 to 1651; it reads RPTLEISEKL…SISKCLASYL (78 aa). Position 1611 is an O-(pantetheine 4'-phosphoryl)serine (Ser1611). The tract at residues 1659-1684 is disordered; it reads QPEDLADADSVESDSDMPTGAVTSGI. The span at 1662–1673 shows a compositional bias: acidic residues; that stretch reads DLADADSVESDS. The 77-residue stretch at 1685–1761 folds into the Carrier 2 domain; it reads TTPDDAVSRL…DLIALVPALN (77 aa). Ser1721 is modified (O-(pantetheine 4'-phosphoryl)serine). The interval 1976–2075 is methyltransferase (CMeT) domain; sequence LELGGGTGGT…IHRMLRPDGF (100 aa). The tract at residues 2200–2514 is thioesterase (TE) domain; the sequence is LMIHGGGHIM…RGYDFLKEEV (315 aa).

The cofactor is pantetheine 4'-phosphate.

The enzyme catalyses 3 malonyl-CoA + acetyl-CoA + S-adenosyl-L-methionine + H(+) = 3-methylorsellinate + S-adenosyl-L-homocysteine + 3 CO2 + 4 CoA. The protein operates within phytotoxin biosynthesis. Its function is as follows. Non-reducing polyketide synthase; part of the gene cluster that mediates the biosynthesis of cichorine, a phytotoxin active against knapweed, corn, and soybeans. The first step in the pathway is performed by the non-reducing polyketide synthase pkbA that condenses one acetyl-CoA starter unit with 3 malonyl-CoA units. PkbA also catalyzes one methylation step to produce 3-methylorsellinate. The nonribosomal peptide synthase-like protein cicB, the cytochrome P450 monooxygenase cicH and the O-methyltransferase cicE are involved in the conversion of 3-methylorsellinate into nidulol. CicB converts 3-methylorsellinate to a yet unidentified intermediate, cicH may play a ring-closing role for cichorine and cicE is plausibly responsible for the methylation of one of the phenol groups. The oxidoreductase cicC acts downstream with still unidentified enzymes to further convert nidulol into cichorin. The polypeptide is Non-reducing polyketide synthase pkbA (Emericella nidulans (strain FGSC A4 / ATCC 38163 / CBS 112.46 / NRRL 194 / M139) (Aspergillus nidulans)).